A 422-amino-acid chain; its full sequence is MYTHVDVVGIAEASAALYVQKDRDRYSDVLTTIENFIYQHKCIITGESAHLLFLKKNIYLYEFYSNNVAEHSKALATLLYKLDPEYLTRYTVLITKIPNHWYVINVDQREFVRLYAIPAVKQHLPIPILPFYCTSALTQQELFCLGPELQLIQIYSKLCNPNFVEEWPTLLDYEKSMRTLFLEQFPQRLEMTGGKKEEEEKHESIIKKIILEMVSTRQRIVVGGYIQKNLYNHVLKNRNRLQLITSLNIYEEKDIIQQFCDSNGLKIKIRINNPLLPTNPELRRLTIYFNNTNDDDQSYLIVDMYNTGSYELVPTNQINTLDGSFLIGTPFVQARFLLVEIWVLMLIAQQTKKDTKKIIQFFINQYEMLMNSPWPSMEALFPSSSKRYLGNYVDPNALIKWAQLKLKRIPPFYPGKPDEKSC.

The protein belongs to the asfivirus K421R family.

The protein resides in the virion. This is an uncharacterized protein from Ornithodoros (relapsing fever ticks).